The sequence spans 144 residues: Peptide methionine sulfoxide reductase MsrB (144 aa).

Residues 1–12 are compositionally biased toward basic and acidic residues; the sequence is MDKQQGELRQRL. Residues 1–25 are disordered; it reads MDKQQGELRQRLTPEQYAVTQEAAT. The 124-residue stretch at 5 to 128 folds into the MsrB domain; it reads QGELRQRLTP…NSAALKFIPV (124 aa). Cysteine 117 functions as the Nucleophile in the catalytic mechanism.

The protein belongs to the MsrB Met sulfoxide reductase family.

The enzyme catalyses L-methionyl-[protein] + [thioredoxin]-disulfide + H2O = L-methionyl-(R)-S-oxide-[protein] + [thioredoxin]-dithiol. The polypeptide is Peptide methionine sulfoxide reductase MsrB (Lactiplantibacillus plantarum (strain ATCC BAA-793 / NCIMB 8826 / WCFS1) (Lactobacillus plantarum)).